The sequence spans 117 residues: Large ribosomal subunit protein bL20 (117 aa).

It belongs to the bacterial ribosomal protein bL20 family.

In terms of biological role, binds directly to 23S ribosomal RNA and is necessary for the in vitro assembly process of the 50S ribosomal subunit. It is not involved in the protein synthesizing functions of that subunit. This is Large ribosomal subunit protein bL20 from Roseiflexus sp. (strain RS-1).